Consider the following 612-residue polypeptide: Citryl-spermidine/3,4-dihydroxybenzoyl-citryl-spermidine:spermidine ligase (612 aa).

ATP-binding positions include 282–284, K298, R310, Y390, and E461; that span reads SMR.

This sequence belongs to the IucA/IucC family. In terms of assembly, homodimer.

It catalyses the reaction N(8)-citryl-spermidine + spermidine + ATP = N(8),N'(8)-citryl-bis(spermidine) + AMP + diphosphate + H(+). The catalysed reaction is N(1)-(3,4-dihydroxybenzoyl)-N(8)-citryl-spermidine + spermidine + ATP = N(1)-(3,4-dihydroxybenzoyl)-N(8),N'(8)-citryl-bis(spermidine) + AMP + diphosphate + H(+). The protein operates within siderophore biosynthesis; petrobactin biosynthesis. Involved in the biosynthesis of petrobactin, a catecholate siderophore that functions in both iron acquisition and virulence. Catalyzes the ATP-dependent condensation of spermidine with N(8)-citryl-spermidine or N(1)-(3,4-dihydroxbenzoyl)-N(8)-citryl-spermidine, two intermediates in petrobactin biosynthesis pathway. The polypeptide is Citryl-spermidine/3,4-dihydroxybenzoyl-citryl-spermidine:spermidine ligase (Bacillus anthracis).